The following is a 566-amino-acid chain: Urease subunit alpha (566 aa).

The region spanning 129 to 566 is the Urease domain; it reads GGVDTHIHFI…LPLAQRYFLF (438 aa). His134, His136, and Lys217 together coordinate Ni(2+). Lys217 carries the post-translational modification N6-carboxylysine. His219 is a binding site for substrate. The Ni(2+) site is built by His246 and His272. The active-site Proton donor is the His320. A Ni(2+)-binding site is contributed by Asp360.

This sequence belongs to the metallo-dependent hydrolases superfamily. Urease alpha subunit family. In terms of assembly, heterotrimer of UreA (gamma), UreB (beta) and UreC (alpha) subunits. Three heterotrimers associate to form the active enzyme. Requires Ni cation as cofactor. Post-translationally, carboxylation allows a single lysine to coordinate two nickel ions.

Its subcellular location is the cytoplasm. The catalysed reaction is urea + 2 H2O + H(+) = hydrogencarbonate + 2 NH4(+). It functions in the pathway nitrogen metabolism; urea degradation; CO(2) and NH(3) from urea (urease route): step 1/1. In Janthinobacterium sp. (strain Marseille) (Minibacterium massiliensis), this protein is Urease subunit alpha.